The chain runs to 207 residues: ATP-dependent dethiobiotin synthetase BioD (207 aa).

Residue 13 to 18 (EVGKTV) coordinates ATP. Threonine 17 is a binding site for Mg(2+). Residue lysine 33 is part of the active site. ATP is bound by residues aspartate 44 and 100–103 (EGAG). Residues aspartate 44 and glutamate 100 each contribute to the Mg(2+) site.

This sequence belongs to the dethiobiotin synthetase family. Homodimer. Mg(2+) is required as a cofactor.

The protein resides in the cytoplasm. It carries out the reaction (7R,8S)-7,8-diammoniononanoate + CO2 + ATP = (4R,5S)-dethiobiotin + ADP + phosphate + 3 H(+). It participates in cofactor biosynthesis; biotin biosynthesis; biotin from 7,8-diaminononanoate: step 1/2. Functionally, catalyzes a mechanistically unusual reaction, the ATP-dependent insertion of CO2 between the N7 and N8 nitrogen atoms of 7,8-diaminopelargonic acid (DAPA, also called 7,8-diammoniononanoate) to form a ureido ring. The polypeptide is ATP-dependent dethiobiotin synthetase BioD (Christiangramia forsetii (strain DSM 17595 / CGMCC 1.15422 / KT0803) (Gramella forsetii)).